Here is a 276-residue protein sequence, read N- to C-terminus: Cell wall synthesis protein KRE9 (276 aa).

A signal peptide spans 1–21 (MRLQRNSIICALVFLVSFVLG).

Belongs to the KRE9/KNH1 family. O-glycosylated.

Its subcellular location is the secreted. It localises to the cell wall. In terms of biological role, involved in cell wall beta(1-&gt;6) glucan synthesis. This is Cell wall synthesis protein KRE9 from Saccharomyces cerevisiae (strain ATCC 204508 / S288c) (Baker's yeast).